A 328-amino-acid polypeptide reads, in one-letter code: tRNA U34 carboxymethyltransferase (328 aa).

Carboxy-S-adenosyl-L-methionine is bound by residues lysine 91, tryptophan 105, lysine 110, glycine 130, 152-154, methionine 196, tyrosine 200, and arginine 315; that span reads DPS.

This sequence belongs to the class I-like SAM-binding methyltransferase superfamily. CmoB family. As to quaternary structure, homotetramer.

It carries out the reaction carboxy-S-adenosyl-L-methionine + 5-hydroxyuridine(34) in tRNA = 5-carboxymethoxyuridine(34) in tRNA + S-adenosyl-L-homocysteine + H(+). Functionally, catalyzes carboxymethyl transfer from carboxy-S-adenosyl-L-methionine (Cx-SAM) to 5-hydroxyuridine (ho5U) to form 5-carboxymethoxyuridine (cmo5U) at position 34 in tRNAs. This Psychromonas ingrahamii (strain DSM 17664 / CCUG 51855 / 37) protein is tRNA U34 carboxymethyltransferase.